The primary structure comprises 430 residues: Glutamyl-tRNA reductase 1 (430 aa).

Substrate is bound by residues 49-52 (TCNR), Ser109, 114-116 (EGQ), and Gln120. The Nucleophile role is filled by Cys50. 189–194 (GAGSMA) lines the NADP(+) pocket.

Belongs to the glutamyl-tRNA reductase family. As to quaternary structure, homodimer.

The enzyme catalyses (S)-4-amino-5-oxopentanoate + tRNA(Glu) + NADP(+) = L-glutamyl-tRNA(Glu) + NADPH + H(+). It participates in porphyrin-containing compound metabolism; protoporphyrin-IX biosynthesis; 5-aminolevulinate from L-glutamyl-tRNA(Glu): step 1/2. Functionally, catalyzes the NADPH-dependent reduction of glutamyl-tRNA(Glu) to glutamate 1-semialdehyde (GSA). In Nocardioides sp. (strain ATCC BAA-499 / JS614), this protein is Glutamyl-tRNA reductase 1.